Here is a 297-residue protein sequence, read N- to C-terminus: Glycerol-3-phosphate dehydrogenase [NAD(P)+] (297 aa).

NADPH-binding residues include Trp-11, Arg-33, and Lys-79. Residues Lys-79, Gly-107, and Ser-109 each coordinate sn-glycerol 3-phosphate. NADPH is bound at residue Ala-111. Positions 161, 214, 224, 225, and 226 each coordinate sn-glycerol 3-phosphate. Lys-161 serves as the catalytic Proton acceptor. Arg-225 serves as a coordination point for NADPH. Residues Val-249 and Glu-251 each coordinate NADPH.

Belongs to the NAD-dependent glycerol-3-phosphate dehydrogenase family.

It localises to the cytoplasm. The enzyme catalyses sn-glycerol 3-phosphate + NAD(+) = dihydroxyacetone phosphate + NADH + H(+). It carries out the reaction sn-glycerol 3-phosphate + NADP(+) = dihydroxyacetone phosphate + NADPH + H(+). Its pathway is membrane lipid metabolism; glycerophospholipid metabolism. Its function is as follows. Catalyzes the reduction of the glycolytic intermediate dihydroxyacetone phosphate (DHAP) to sn-glycerol 3-phosphate (G3P), the key precursor for phospholipid synthesis. The sequence is that of Glycerol-3-phosphate dehydrogenase [NAD(P)+] from Campylobacter jejuni subsp. doylei (strain ATCC BAA-1458 / RM4099 / 269.97).